Reading from the N-terminus, the 234-residue chain is MNSTPDASSRPSIRALTLLEGRVLGVLVEKQHTVPDSYPLSLNALTLGCNQKTGRAPVMNATEAEVLTAVDGLKRLSLVMEGSSSRVPRFEHNMNRVLGLPSQSAALLTILLLRGPQTAAELRLNSARLHGFADISSVEAFLDELAANDPPRVVKLARVPGERENRWMHLLCGEVSVSELAQPGDEDDSVPLSAFEAVKAEQKRLADEVSRLQTLVRRMAAELGIDAGDLTAGE.

The protein belongs to the UPF0502 family.

In Paraburkholderia phytofirmans (strain DSM 17436 / LMG 22146 / PsJN) (Burkholderia phytofirmans), this protein is UPF0502 protein Bphyt_5265.